A 324-amino-acid polypeptide reads, in one-letter code: MDGEEAPPGALNLADYAPAGARTVDCFRRIRKIGEGTYGEVFEAMDIITGERAALKKIKLDDGKEGFPRQILREIKLLKKLDHENIIRLKEIVVSPGTAHGAGGSDDYMYRGDIYMVFEYMDHDLKKVLHHSTPSQVKYYMEQLLKGLHYCHVNNVLHRDIKGANLLISGGGKLLKLADFGLARPFTRDGSFTNHVITLWYRPPELLLGATNYAEAVDIWSVGCIFAEFLLRKPLFPGRTEQEQLSKIFELCGFPNEENWPGVSKLPLYKTIRPTTPTKRRLRDIFHNFDSHAVDLIDRMLILNPTERISAHDALCAAYFITKM.

The Protein kinase domain maps to 27 to 320 (FRRIRKIGEG…AHDALCAAYF (294 aa)). Residues 33 to 41 (IGEGTYGEV) and lysine 56 each bind ATP. At threonine 37 the chain carries Phosphothreonine. Position 38 is a phosphotyrosine (tyrosine 38). Aspartate 160 serves as the catalytic Proton acceptor. Threonine 193 bears the Phosphothreonine mark.

The protein belongs to the protein kinase superfamily. CMGC Ser/Thr protein kinase family. CDC2/CDKX subfamily.

The catalysed reaction is L-seryl-[protein] + ATP = O-phospho-L-seryl-[protein] + ADP + H(+). It catalyses the reaction L-threonyl-[protein] + ATP = O-phospho-L-threonyl-[protein] + ADP + H(+). It carries out the reaction [DNA-directed RNA polymerase] + ATP = phospho-[DNA-directed RNA polymerase] + ADP + H(+). The sequence is that of Cyclin-dependent kinase C-3 (CDKC-1) from Oryza sativa subsp. japonica (Rice).